The chain runs to 1197 residues: MRQWTKEQQAAIDARGSNLLVAAAAGSGKTAVLVERIIQIILKDRIDIDRLLIVTFTNAAAGEMRERIAGAIMTEMEKKTGGEEHLRRQLSLLNRASITTVHSFCIDVVRRHFHMIDVDPGFRIGDVTETSIMKLEALEELFEDEYEKGNEEFFNLVEAFGGTREDRPLQDLVLKIYGFIQSQPYPEIWLRERVEDFALSIEAFNQSPWIRTIKKRMGILLKGAMDLLEIAQTIALEPGGPDVYEEAILSDLDQIKELYHSLENPITDFYEQLNCINFIRLKTSKDSDPILKEECKDLRDKAKDIVKDIRENIFNVSPEEYVEDLNRLYPLMDYLYRLVIGFTERYTEKKTDKGIVDFNDLEHFALRILANDLAAQEYREKFEYIFVDEYQDSNIVQETLIQSIKREDNLFMVGDVKQSIYRFRLADPTLFIEKYETFGTEEGHINRRIDLAKNFRSRGQVLNGVNYIFKHMMSKELGEIDYDERAALYQGTEFEPIQDPSIEINLIEKNMEIDEEMEEELQELADIEVEARIVAKRIKALLNEEIYDPRVEGYRKIEYKDIVVLLRTTQNWAQSFLEVFVREGIPAYADANTGYFEAIEVNMFLNLLRVIDNKRQDIPLLSVMRSPIGDFTTEELIHIRVNDKTGTYYDAIEKYVEEKTDDLKYKLVSFIEKLNQWANDARYIKIDQFIWKLFMDTGYYYYVGAMPGGLQRQANLRVLFDRANQFEKTSIKGLFNFIKFIEKLQSSKGDMGAAKILGENDNVVRIMSIHKSKGLEFPVVITAGMGKNFNLRDTSADVLLHKDLGLGPKFTDPNLRTYRDTIAKLAMKDQIKIESLSEEMRILYVAFTRPKDKLIVVGSIRNIEKQVKKWSKADNVYSLMNAKNYLDWIGTALVKHPDGQALRELGGLGFDAASDGMEDSEWTINILGRQVIVLEEQDKVLKEEDYREKLLYFNREDFSSGGYTEYKEEIENRLNWKYDHPHSVQIPSKLSVSDIKKAHINEIDVIAHQIPILVKSPKFMEGKTTFTAAERGTVIHFVLQHLDLNKVGSEEDIREQIHWMVARELITEEESKVVDTKKILNYFYSPIGERMRKAKKVYRESPFIIEKSAGEVIEGLSDDIEDKLLVQGIIDCYFEEKDGLILIDYKNDIVLNGNIAAVVARYELQLSLYREALERITGREVKETYLYLFDVDQGVRL.

Residues 2–458 (RQWTKEQQAA…IDLAKNFRSR (457 aa)) form the UvrD-like helicase ATP-binding domain. An ATP-binding site is contributed by 23 to 30 (AAAGSGKT). The region spanning 485-774 (RAALYQGTEF…RIMSIHKSKG (290 aa)) is the UvrD-like helicase C-terminal domain.

Belongs to the helicase family. AddA subfamily. Heterodimer of AddA and AddB/RexB. Mg(2+) serves as cofactor.

It catalyses the reaction Couples ATP hydrolysis with the unwinding of duplex DNA by translocating in the 3'-5' direction.. The catalysed reaction is ATP + H2O = ADP + phosphate + H(+). Its function is as follows. The heterodimer acts as both an ATP-dependent DNA helicase and an ATP-dependent, dual-direction single-stranded exonuclease. Recognizes the chi site generating a DNA molecule suitable for the initiation of homologous recombination. The AddA nuclease domain is required for chi fragment generation; this subunit has the helicase and 3' -&gt; 5' nuclease activities. The sequence is that of ATP-dependent helicase/nuclease subunit A from Alkaliphilus oremlandii (strain OhILAs) (Clostridium oremlandii (strain OhILAs)).